A 210-amino-acid chain; its full sequence is Imidazole glycerol phosphate synthase subunit HisH 1 (210 aa).

The Glutamine amidotransferase type-1 domain maps to 3–210 (KIAIVDYGMC…LDNFLSFSNV (208 aa)). The active-site Nucleophile is the C82. Residues H189 and E191 contribute to the active site.

As to quaternary structure, heterodimer of HisH and HisF.

It is found in the cytoplasm. It carries out the reaction 5-[(5-phospho-1-deoxy-D-ribulos-1-ylimino)methylamino]-1-(5-phospho-beta-D-ribosyl)imidazole-4-carboxamide + L-glutamine = D-erythro-1-(imidazol-4-yl)glycerol 3-phosphate + 5-amino-1-(5-phospho-beta-D-ribosyl)imidazole-4-carboxamide + L-glutamate + H(+). The enzyme catalyses L-glutamine + H2O = L-glutamate + NH4(+). The protein operates within amino-acid biosynthesis; L-histidine biosynthesis; L-histidine from 5-phospho-alpha-D-ribose 1-diphosphate: step 5/9. IGPS catalyzes the conversion of PRFAR and glutamine to IGP, AICAR and glutamate. The HisH subunit provides the glutamine amidotransferase activity that produces the ammonia necessary to HisF for the synthesis of IGP and AICAR. This Parasynechococcus marenigrum (strain WH8102) protein is Imidazole glycerol phosphate synthase subunit HisH 1 (hisH1).